The following is a 457-amino-acid chain: Tubulin gamma-2 chain (457 aa).

142–148 (AGGTGSG) is a GTP binding site.

It belongs to the tubulin family. In terms of assembly, interacts with Ote. In terms of tissue distribution, expressed in nurse cells and oocytes of developing egg chambers.

The protein localises to the cytoplasm. It is found in the cytoskeleton. The protein resides in the microtubule organizing center. It localises to the centrosome. Its subcellular location is the spindle. In terms of biological role, tubulin is the major constituent of microtubules. The gamma chain is found at microtubule organizing centers (MTOC) such as the spindle poles or the centrosome, suggesting that it is involved in the minus-end nucleation of microtubule assembly. Required for oocyte activation and consequently for organization of the female meiotic spindle. Essential for centrosome organization and assembly of biastral mitotic spindles in embryos. Plays a role in stabilizing the augmin complex on the meiotic spindle. In Drosophila melanogaster (Fruit fly), this protein is Tubulin gamma-2 chain (gammaTub37C).